We begin with the raw amino-acid sequence, 478 residues long: Amino acid oxidase imqH (478 aa).

Positions 1 to 22 (MPAPKSIIIVGSGVFGLSTAHA) are cleaved as a signal peptide. 8 residues coordinate FAD: valine 14, phenylalanine 15, aspartate 38, asparagine 53, alanine 57, asparagine 58, arginine 63, and isoleucine 64. Asparagine 97 and asparagine 167 each carry an N-linked (GlcNAc...) asparagine glycan. Position 208 (valine 208) interacts with FAD. Cysteine 399 bears the S-8alpha-FAD cysteine mark. Positions 432 and 433 each coordinate FAD.

It belongs to the MSOX/MTOX family. Dimer. FAD is required as a cofactor.

The protein operates within secondary metabolite biosynthesis. In terms of biological role, nonribosomal peptide synthetase; part of the gene cluster that mediates the biosynthesis of imizoquins A to D, tripeptide-derived alkaloids that serve a protective role against oxidative stress that are essential for normal germination. ImqB is a canonical three-module NRPS that assembles the tripeptide backbone of the imizoquins via condensation of Trp, Tyr, and Leu-derived precursors. N-methylation by imqF and phenol oxidation by imqC, followed by cyclization via the FAD-dependent oxidase imqH carry out the three-step transformation of L-tyrosine into tetrahydroisoquinoline. Importantly, this sequence requires the presence of a free amine in the tyrosine moiety, indicating that isoquinoline formation occurs prior to peptide bond formation. The imidazolidin-4-one ring of imizoquins could form following additional oxidation of the methyl-derived bridgehead carbon by imqH. Lastly, O-methylation by imqG and leucine hydroxylation by imqE complete biosynthesis of the imizoquins. This is Amino acid oxidase imqH from Aspergillus flavus (strain ATCC 200026 / FGSC A1120 / IAM 13836 / NRRL 3357 / JCM 12722 / SRRC 167).